Reading from the N-terminus, the 291-residue chain is Tyrosine recombinase XerD (291 aa).

Positions 1 to 82 (MEEGLIDRLL…ACKRLYIWME (82 aa)) constitute a Core-binding (CB) domain. Residues 103-285 (NIPTLITEQQ…ANVWLQGVVK (183 aa)) form the Tyr recombinase domain. Active-site residues include arginine 143, lysine 167, histidine 237, arginine 240, and histidine 263. The active-site O-(3'-phospho-DNA)-tyrosine intermediate is tyrosine 272.

Belongs to the 'phage' integrase family. XerD subfamily. As to quaternary structure, forms a cyclic heterotetrameric complex composed of two molecules of XerC and two molecules of XerD.

It localises to the cytoplasm. Functionally, site-specific tyrosine recombinase, which acts by catalyzing the cutting and rejoining of the recombining DNA molecules. The XerC-XerD complex is essential to convert dimers of the bacterial chromosome into monomers to permit their segregation at cell division. It also contributes to the segregational stability of plasmids. The chain is Tyrosine recombinase XerD from Neisseria meningitidis serogroup A / serotype 4A (strain DSM 15465 / Z2491).